Here is an 809-residue protein sequence, read N- to C-terminus: LPS-assembly protein LptD (809 aa).

The first 22 residues, 1 to 22 (MRRALRLLPLPLSIAICLPAMA), serve as a signal peptide directing secretion.

This sequence belongs to the LptD family. In terms of assembly, component of the lipopolysaccharide transport and assembly complex. Interacts with LptE and LptA.

The protein localises to the cell outer membrane. Functionally, together with LptE, is involved in the assembly of lipopolysaccharide (LPS) at the surface of the outer membrane. This Xanthomonas campestris pv. campestris (strain 8004) protein is LPS-assembly protein LptD.